Here is an 886-residue protein sequence, read N- to C-terminus: Protein suppressor of hairy wing (886 aa).

2 disordered regions span residues 24–62 (SVSP…GIKG) and 167–211 (DEVV…KNSG). A compositionally biased stretch (acidic residues) spans 184-201 (VTEEEEEEEEDDLDEEGD). A C2H2-type 1; atypical zinc finger spans residues 221-243 (HVCGKCYKTFRRLMSLKKHLEFC). Residues 291-314 (INCPDCPKSFKTQTSYERHIFITH) form a C2H2-type 2 zinc finger. The segment at 320-342 (YPCSICNANLRSEALLKLHEEQH) adopts a C2H2-type 3; atypical zinc-finger fold. C2H2-type zinc fingers lie at residues 349–367 (YACK…LKRH), 381–403 (MSCK…LKHH), 414–436 (YMCH…IRTH), 442–464 (FDCD…RRYH), 470–492 (YSCT…MKRH), 498–520 (HKCE…SKTH), 524–546 (FACD…VKEH), 554–578 (FSCT…AGDH), and 600–623 (TDCA…RSVH). Residues 571-587 (QHMDAGDHSEKSGEKPQ) show a composition bias toward basic and acidic residues. Residues 571-594 (QHMDAGDHSEKSGEKPQRAKRSST) are disordered.

The protein localises to the nucleus. Functionally, component of the gypsy chromatin insulator complex which is required for the function of the gypsy chromatin insulator and other endogenous chromatin insulators. Chromatin insulators are regulatory elements which establish independent domains of transcriptional activity within eukaryotic genomes. Insulators have two defining properties; they can block the communication between an enhancer and a promoter when placed between them and can also buffer transgenes from position effect variegation (PEV). Insulators are proposed to structure the chromatin fiber into independent domains of differing transcriptional potential by promoting the formation of distinct chromatin loops. This chromatin looping may involve the formation of insulator bodies, where homotypic interactions between individual subunits of the insulator complex could promote the clustering of widely spaced insulators at the nuclear periphery. Within the gypsy insulator complex, this protein binds specifically to a region of the gypsy element located 3' of the 5' long terminal repeat (LTR), and may also mediate interaction with other endogenous insulators at sites distinct from those recognized by Cp190. Cooperates with pita and cliff to recruit Cp190 and regulate insulator function at the front-ultraabdominal (Fub) boundary. The sequence is that of Protein suppressor of hairy wing (su(Hw)) from Drosophila ananassae (Fruit fly).